The chain runs to 189 residues: GTP cyclohydrolase 1 (189 aa).

3 residues coordinate Zn(2+): cysteine 79, histidine 82, and cysteine 150.

Belongs to the GTP cyclohydrolase I family. As to quaternary structure, homomer.

It carries out the reaction GTP + H2O = 7,8-dihydroneopterin 3'-triphosphate + formate + H(+). Its pathway is cofactor biosynthesis; 7,8-dihydroneopterin triphosphate biosynthesis; 7,8-dihydroneopterin triphosphate from GTP: step 1/1. This Rickettsia peacockii (strain Rustic) protein is GTP cyclohydrolase 1.